A 303-amino-acid polypeptide reads, in one-letter code: Ribosomal RNA small subunit methyltransferase H (303 aa).

S-adenosyl-L-methionine is bound by residues 36-38 (CGH), aspartate 55, phenylalanine 81, aspartate 101, and glutamine 108.

Belongs to the methyltransferase superfamily. RsmH family.

The protein resides in the cytoplasm. It catalyses the reaction cytidine(1402) in 16S rRNA + S-adenosyl-L-methionine = N(4)-methylcytidine(1402) in 16S rRNA + S-adenosyl-L-homocysteine + H(+). Its function is as follows. Specifically methylates the N4 position of cytidine in position 1402 (C1402) of 16S rRNA. This Aster yellows witches'-broom phytoplasma (strain AYWB) protein is Ribosomal RNA small subunit methyltransferase H.